A 367-amino-acid chain; its full sequence is Probable butyrate kinase (367 aa).

This sequence belongs to the acetokinase family.

Its subcellular location is the cytoplasm. The catalysed reaction is butanoate + ATP = butanoyl phosphate + ADP. In Exiguobacterium sibiricum (strain DSM 17290 / CCUG 55495 / CIP 109462 / JCM 13490 / 255-15), this protein is Probable butyrate kinase.